The primary structure comprises 431 residues: SPI-1 type 3 secretion system ATPase (431 aa).

Position 162–167 (162–167 (GCGKTM)) interacts with ATP.

This sequence belongs to the ATPase alpha/beta chains family. T3SS ATPase subfamily. In terms of assembly, the core secretion machinery of the T3SS is composed of approximately 20 different proteins, including cytoplasmic components, a base, an export apparatus and a needle. This subunit is part of the cytosolic complex. Forms homohexamers.

It localises to the cytoplasm. The enzyme catalyses ATP + H2O + cellular proteinSide 1 = ADP + phosphate + cellular proteinSide 2.. Functionally, ATPase component of the type III secretion system (T3SS), also called injectisome, which is used to inject bacterial effector proteins into eukaryotic host cells. Acts as a molecular motor to provide the energy that is required for the export of proteins. Required for type III secretion apparatus (T3SA) formation, proper protein secretion, host cell invasion and virulence. May play a critical role in T3SS substrate recognition, disassembly of the effector/chaperone complex and unfolding of the effector in an ATP-dependent manner prior to secretion. The chain is SPI-1 type 3 secretion system ATPase from Salmonella typhi.